We begin with the raw amino-acid sequence, 1257 residues long: Probable aldehyde oxidase gad-3 (1257 aa).

The 88-residue stretch at 4–91 folds into the 2Fe-2S ferredoxin-type domain; sequence TGIFFNVNGK…KTFVITVEGV (88 aa). Residues C43, C48, C51, and C73 each contribute to the [2Fe-2S] cluster site. Positions 229 to 459 constitute an FAD-binding PCMH-type domain; sequence LKGDRIELLL…TSLEVHIDAL (231 aa). E1208 acts as the Proton acceptor in catalysis.

It belongs to the xanthine dehydrogenase family. [2Fe-2S] cluster serves as cofactor. It depends on FAD as a cofactor. The cofactor is Mo-molybdopterin.

The catalysed reaction is an aldehyde + O2 + H2O = a carboxylate + H2O2 + H(+). In terms of biological role, may be involved in the metabolism of 1-methylnicotinamide (MNA). Linked to regulation of longevity through generation of reactive oxygen species, where it probably functions in a pathway downstream of the sirtuin sir-2.1 and the nicotinamide N-methyltransferase anmt-1. The sequence is that of Probable aldehyde oxidase gad-3 from Caenorhabditis elegans.